A 467-amino-acid polypeptide reads, in one-letter code: Glutamate--tRNA ligase (467 aa).

The 'HIGH' region signature appears at 9-19; that stretch reads PSPTGFLHIGG. The 'KMSKS' region motif lies at 250 to 254; it reads KLSKR. Residue K253 coordinates ATP.

This sequence belongs to the class-I aminoacyl-tRNA synthetase family. Glutamate--tRNA ligase type 1 subfamily. Monomer.

It is found in the cytoplasm. It carries out the reaction tRNA(Glu) + L-glutamate + ATP = L-glutamyl-tRNA(Glu) + AMP + diphosphate. Its function is as follows. Catalyzes the attachment of glutamate to tRNA(Glu) in a two-step reaction: glutamate is first activated by ATP to form Glu-AMP and then transferred to the acceptor end of tRNA(Glu). The chain is Glutamate--tRNA ligase from Mesomycoplasma hyopneumoniae (strain 232) (Mycoplasma hyopneumoniae).